Consider the following 32-residue polypeptide: Delta-conotoxin-like CnVIC (32 aa).

Disulfide bonds link Cys-3-Cys-18, Cys-10-Cys-22, and Cys-17-Cys-27. 4-hydroxyproline occurs at positions 6 and 14.

Belongs to the conotoxin O1 superfamily. In terms of tissue distribution, expressed by the venom duct.

It is found in the secreted. Functionally, delta-conotoxins bind to site 6 of voltage-gated sodium channels (Nav) and inhibit the inactivation process. This toxin acts on Nav1.2/SCN2A, Nav1.4/SCN4A, Nav1.5/SCN5A (weak activity), Nav1.6/SCN8A (EC(50)=2.5 uM). This Conus consors (Singed cone) protein is Delta-conotoxin-like CnVIC.